A 192-amino-acid polypeptide reads, in one-letter code: ATP-dependent Clp protease proteolytic subunit 1 (192 aa).

The Nucleophile role is filled by serine 92. The active site involves histidine 117.

Belongs to the peptidase S14 family. As to quaternary structure, fourteen ClpP subunits assemble into 2 heptameric rings which stack back to back to give a disk-like structure with a central cavity, resembling the structure of eukaryotic proteasomes.

The protein localises to the cytoplasm. The catalysed reaction is Hydrolysis of proteins to small peptides in the presence of ATP and magnesium. alpha-casein is the usual test substrate. In the absence of ATP, only oligopeptides shorter than five residues are hydrolyzed (such as succinyl-Leu-Tyr-|-NHMec, and Leu-Tyr-Leu-|-Tyr-Trp, in which cleavage of the -Tyr-|-Leu- and -Tyr-|-Trp bonds also occurs).. In terms of biological role, cleaves peptides in various proteins in a process that requires ATP hydrolysis. Has a chymotrypsin-like activity. Plays a major role in the degradation of misfolded proteins. The chain is ATP-dependent Clp protease proteolytic subunit 1 from Chlamydia muridarum (strain MoPn / Nigg).